The following is a 132-amino-acid chain: Small ribosomal subunit protein uS8c (132 aa).

It belongs to the universal ribosomal protein uS8 family. As to quaternary structure, part of the 30S ribosomal subunit.

It localises to the plastid. The protein resides in the chloroplast. Its function is as follows. One of the primary rRNA binding proteins, it binds directly to 16S rRNA central domain where it helps coordinate assembly of the platform of the 30S subunit. The polypeptide is Small ribosomal subunit protein uS8c (rps8) (Illicium oligandrum (Star anise)).